A 696-amino-acid chain; its full sequence is DEAD-box ATP-dependent RNA helicase 7 (696 aa).

Residues 1-116 (MPSLPVAAAE…GDEDPADPNA (116 aa)) form a disordered region. Residues 16–97 (ESASKKSKRK…KVVVEEEEED (82 aa)) adopt a coiled-coil conformation. Basic and acidic residues predominate over residues 27–38 (KAAEVEVEASSR). Basic residues predominate over residues 39-49 (KKEKKEKKRKA). Positions 67-77 (STSSDEPAPAA) are enriched in low complexity. Acidic residues predominate over residues 92 to 112 (EEEEEDDDEGELTASGDEDPA). A Q motif motif is present at residues 115-143 (NALANFRISESLREKLKSKGIKALFPIQA). The region spanning 146–328 (FDLVLDGHDL…LRFLKSGKKT (183 aa)) is the Helicase ATP-binding domain. ATP is bound at residue 159–166 (ARTGQGKT). Residues 274–277 (DEAD) carry the DEAD box motif. Positions 357–500 (QVIPDIIRCY…ISAPQPTDVA (144 aa)) constitute a Helicase C-terminal domain. The segment at 641–696 (LPPLQEREQSGGSRGGGRFGNRRFSGGGGGRGGGGRGFGGGRGRGGGGGNRFNKRY) is disordered. Residues 652 to 690 (GSRGGGRFGNRRFSGGGGGRGGGGRGFGGGRGRGGGGGN) are compositionally biased toward gly residues.

This sequence belongs to the DEAD box helicase family. DDX21/DDX50 subfamily.

It is found in the nucleus. It catalyses the reaction ATP + H2O = ADP + phosphate + H(+). The sequence is that of DEAD-box ATP-dependent RNA helicase 7 from Oryza sativa subsp. japonica (Rice).